The following is a 356-amino-acid chain: Cyanide hydratase (356 aa).

The CN hydrolase domain occupies 15-290 (FKVAAVQAEP…EVVLYANISL (276 aa)). The active-site Proton acceptor is the Glu-55. The active site involves Lys-137. The active-site Nucleophile is the Cys-172. The tract at residues 331 to 356 (DEQAASKAQQAEIDNAGKGSIVPSKL) is disordered.

The protein belongs to the carbon-nitrogen hydrolase superfamily. Nitrilase family.

It catalyses the reaction formamide = hydrogen cyanide + H2O. Catalyzes the hydration of cyanide to formamide. Degradation of cyanide may be important for plant pathogenic fungi in infection of cyanogenic plants. The sequence is that of Cyanide hydratase from Armillaria gallica (Bulbous honey fungus).